The primary structure comprises 271 residues: Hematopoietically-expressed homeobox protein Hhex (271 aa).

The interaction with SOX13 stretch occupies residues 1–138 (MQFPHPGPAA…PFLQRPLHKR (138 aa)). S54 is subject to Phosphoserine. Residues 138–197 (RKGGQVRFSNDQTVELEKKFETQKYLSPPERKRLAKMLQLSERQVKTWFQNRRAKWRRLK) constitute a DNA-binding region (homeobox). Positions 138–271 (RKGGQVRFSN…EGDKGYFNAG (134 aa)) are required for WNT signaling induction. The disordered stretch occupies residues 195-271 (RLKQENPQSN…EGDKGYFNAG (77 aa)). The segment covering 212–242 (LDTSCEQGQDLPSEQNKGASLDRSQCSPSPA) has biased composition (polar residues). Residues 245–261 (EDPDSEISEDSDQEVDI) show a composition bias toward acidic residues.

As to quaternary structure, interacts with CD81; the interaction prevents nuclear translocation of HHEX. Interacts (via N-terminus) with SOX13; abolishes the SOX13-mediated inhibition of WNT-mediated transcriptional activity via competitive inhibition of the SOX13-TCF7 complex. Interacts with EIF4E; the interaction inhibits EIF4E-mediated mRNA nuclear export.

The protein localises to the nucleus. Its subcellular location is the nuclear body. It localises to the cytoplasm. Recognizes the DNA sequence 5'-ATTAA-3'. Transcriptional repressor. Activator of WNT-mediated transcription in conjunction with CTNNB1. Establishes anterior identity at two levels; acts early to enhance canonical WNT-signaling by repressing expression of TLE4, and acts later to inhibit NODAL-signaling by directly targeting NODAL. Inhibits EIF4E-mediated mRNA nuclear export. May play a role in hematopoietic differentiation. In Mus musculus (Mouse), this protein is Hematopoietically-expressed homeobox protein Hhex (Hhex).